The primary structure comprises 213 residues: Pyrrolidone-carboxylate peptidase (213 aa).

Residues Glu-78, Cys-141, and His-165 contribute to the active site.

The protein belongs to the peptidase C15 family. In terms of assembly, homotetramer.

Its subcellular location is the cytoplasm. It carries out the reaction Release of an N-terminal pyroglutamyl group from a polypeptide, the second amino acid generally not being Pro.. Functionally, removes 5-oxoproline from various penultimate amino acid residues except L-proline. The chain is Pyrrolidone-carboxylate peptidase from Finegoldia magna (strain ATCC 29328 / DSM 20472 / WAL 2508) (Peptostreptococcus magnus).